Here is a 384-residue protein sequence, read N- to C-terminus: Branched-chain-amino-acid aminotransferase 1, mitochondrial (384 aa).

Residues 1–18 constitute a mitochondrion transit peptide; the sequence is MALRRCLPQYSTTSSYLS. Lysine 231 carries the post-translational modification N6-(pyridoxal phosphate)lysine.

This sequence belongs to the class-IV pyridoxal-phosphate-dependent aminotransferase family. Pyridoxal 5'-phosphate is required as a cofactor.

It is found in the mitochondrion. It catalyses the reaction L-leucine + 2-oxoglutarate = 4-methyl-2-oxopentanoate + L-glutamate. It carries out the reaction L-isoleucine + 2-oxoglutarate = (S)-3-methyl-2-oxopentanoate + L-glutamate. The catalysed reaction is L-valine + 2-oxoglutarate = 3-methyl-2-oxobutanoate + L-glutamate. The protein operates within amino-acid degradation; L-leucine degradation; 4-methyl-2-oxopentanoate from L-leucine (aminotransferase route): step 1/1. It functions in the pathway amino-acid degradation; L-valine degradation. Its function is as follows. Converts 2-oxo acids to branched-chain amino acids. Acts on leucine, isoleucine and valine. The protein is Branched-chain-amino-acid aminotransferase 1, mitochondrial (BCAT1) of Arabidopsis thaliana (Mouse-ear cress).